The primary structure comprises 320 residues: Lipoyl synthase (320 aa).

The span at 1 to 24 (MIGKLVRDLKIPDQRHPEKAHRPD) shows a compositional bias: basic and acidic residues. The tract at residues 1–30 (MIGKLVRDLKIPDQRHPEKAHRPDNVQPKK) is disordered. Residues C60, C65, C71, C86, C90, C93, and S300 each contribute to the [4Fe-4S] cluster site. A Radical SAM core domain is found at 72 to 289 (WSQGHATMMI…EKAAYGKGFL (218 aa)).

The protein belongs to the radical SAM superfamily. Lipoyl synthase family. [4Fe-4S] cluster is required as a cofactor.

The protein localises to the cytoplasm. It carries out the reaction [[Fe-S] cluster scaffold protein carrying a second [4Fe-4S](2+) cluster] + N(6)-octanoyl-L-lysyl-[protein] + 2 oxidized [2Fe-2S]-[ferredoxin] + 2 S-adenosyl-L-methionine + 4 H(+) = [[Fe-S] cluster scaffold protein] + N(6)-[(R)-dihydrolipoyl]-L-lysyl-[protein] + 4 Fe(3+) + 2 hydrogen sulfide + 2 5'-deoxyadenosine + 2 L-methionine + 2 reduced [2Fe-2S]-[ferredoxin]. Its pathway is protein modification; protein lipoylation via endogenous pathway; protein N(6)-(lipoyl)lysine from octanoyl-[acyl-carrier-protein]: step 2/2. In terms of biological role, catalyzes the radical-mediated insertion of two sulfur atoms into the C-6 and C-8 positions of the octanoyl moiety bound to the lipoyl domains of lipoate-dependent enzymes, thereby converting the octanoylated domains into lipoylated derivatives. The polypeptide is Lipoyl synthase (Cereibacter sphaeroides (strain ATCC 17029 / ATH 2.4.9) (Rhodobacter sphaeroides)).